A 208-amino-acid polypeptide reads, in one-letter code: Adenylyl-sulfate kinase 3 (208 aa).

37 to 45 serves as a coordination point for ATP; the sequence is GLSGSGKST. Substrate contacts are provided by residues Asp67, Arg70, Arg84, Asn87, 110-111, and Gly160; that span reads IS. Residue Ser111 is the Phosphoserine intermediate of the active site.

The protein belongs to the APS kinase family. Expressed in root vasculature, root tips, leaf epidermal and guard cells, pollen grains and radicle of immature seeds.

The protein localises to the cytoplasm. The protein resides in the cytosol. The enzyme catalyses adenosine 5'-phosphosulfate + ATP = 3'-phosphoadenylyl sulfate + ADP + H(+). It functions in the pathway sulfur metabolism; hydrogen sulfide biosynthesis; sulfite from sulfate: step 2/3. Its function is as follows. Catalyzes the synthesis of activated sulfate for the sulfation of secondary metabolites, including the glucosinolates. Essential for plant reproduction and viability. The polypeptide is Adenylyl-sulfate kinase 3 (Arabidopsis thaliana (Mouse-ear cress)).